We begin with the raw amino-acid sequence, 357 residues long: tRNA N6-adenosine threonylcarbamoyltransferase (357 aa).

Residues histidine 120 and histidine 124 each contribute to the Fe cation site. Residues 143 to 147, aspartate 176, glycine 189, and asparagine 289 each bind substrate; that span reads LVSGG. A Fe cation-binding site is contributed by aspartate 317.

This sequence belongs to the KAE1 / TsaD family. Fe(2+) serves as cofactor.

The protein localises to the cytoplasm. It carries out the reaction L-threonylcarbamoyladenylate + adenosine(37) in tRNA = N(6)-L-threonylcarbamoyladenosine(37) in tRNA + AMP + H(+). Functionally, required for the formation of a threonylcarbamoyl group on adenosine at position 37 (t(6)A37) in tRNAs that read codons beginning with adenine. Is involved in the transfer of the threonylcarbamoyl moiety of threonylcarbamoyl-AMP (TC-AMP) to the N6 group of A37, together with TsaE and TsaB. TsaD likely plays a direct catalytic role in this reaction. This is tRNA N6-adenosine threonylcarbamoyltransferase from Polynucleobacter necessarius subsp. necessarius (strain STIR1).